The chain runs to 270 residues: Myeloid leukemia factor 1 (270 aa).

Phosphoserine is present on residues serine 6, serine 8, serine 32, and serine 34. An interaction with COPS3 region spans residues 50–125 (RARNRMGHED…VGDEPPKVFQ (76 aa)). Disordered regions lie at residues 127-148 (STQT…RDSD) and 221-247 (RSVA…AIEH). The segment covering 138–148 (KETRKALRDSD) has biased composition (basic and acidic residues).

This sequence belongs to the MLF family. As to quaternary structure, interacts with CENPU. Also interacts with NRBP1/MADM, YWHAZ/14-3-3-zeta and HNRPUL2/MANP. NRBP1 recruits a serine kinase which phosphorylates both itself and MLF1. Phosphorylated MLF1 then binds to YWHAZ and is retained in the cytoplasm. Retained in the nucleus by binding to HNRPUL2. Binds to COPS3/CSN3 which is required for suppression of COP1 and activation of p53. Phosphorylation is required for binding to YWHAZ.

Its subcellular location is the cytoplasm. It is found in the nucleus. It localises to the cell projection. The protein localises to the cilium. The protein resides in the cytoskeleton. Its subcellular location is the cilium basal body. Functionally, involved in lineage commitment of primary hemopoietic progenitors by restricting erythroid formation and enhancing myeloid formation. Interferes with erythropoietin-induced erythroid terminal differentiation by preventing cells from exiting the cell cycle through suppression of CDKN1B/p27Kip1 levels. Suppresses COP1 activity via CSN3 which activates p53 and induces cell cycle arrest. Binds DNA and affects the expression of a number of genes so may function as a transcription factor in the nucleus. This Bos taurus (Bovine) protein is Myeloid leukemia factor 1 (MLF1).